A 61-amino-acid polypeptide reads, in one-letter code: Large ribosomal subunit protein uL29 (61 aa).

This sequence belongs to the universal ribosomal protein uL29 family.

The protein is Large ribosomal subunit protein uL29 of Xanthomonas campestris pv. campestris (strain 8004).